The chain runs to 203 residues: Guanylate kinase (203 aa).

In terms of domain architecture, Guanylate kinase-like spans 3 to 181; sequence GTLYIVAAPS…AVSEMCAIFT (179 aa). 10–17 lines the ATP pocket; it reads APSGAGKS.

It belongs to the guanylate kinase family.

The protein localises to the cytoplasm. The enzyme catalyses GMP + ATP = GDP + ADP. In terms of biological role, essential for recycling GMP and indirectly, cGMP. This Xanthomonas oryzae pv. oryzae (strain MAFF 311018) protein is Guanylate kinase.